The sequence spans 485 residues: Glycogen synthase (485 aa).

Lys-15 is a binding site for ADP-alpha-D-glucose.

The protein belongs to the glycosyltransferase 1 family. Bacterial/plant glycogen synthase subfamily.

It carries out the reaction [(1-&gt;4)-alpha-D-glucosyl](n) + ADP-alpha-D-glucose = [(1-&gt;4)-alpha-D-glucosyl](n+1) + ADP + H(+). It functions in the pathway glycan biosynthesis; glycogen biosynthesis. Functionally, synthesizes alpha-1,4-glucan chains using ADP-glucose. The chain is Glycogen synthase from Fervidobacterium nodosum (strain ATCC 35602 / DSM 5306 / Rt17-B1).